We begin with the raw amino-acid sequence, 163 residues long: uncharacterized protein (163 aa).

The Cytoplasmic portion of the chain corresponds to 1–33 (MKTLDKITNYDLFDFADEFLKFVPVFRPNPTVT). The chain crosses the membrane as a helical span at residues 34 to 54 (CLFGNPLTNLLVNGTGAACFF). Residues 55 to 117 (EFCSLALIKV…SLGMALPDDD (63 aa)) are Extracellular-facing. Residues 118–138 (VLLSITFWFLCNSSFSILFVF) traverse the membrane as a helical segment. The Cytoplasmic segment spans residues 139–163 (ELRIFLRTVNNLLVVFLSVLKRNDL).

It localises to the membrane. This is an uncharacterized protein from Saccharomyces cerevisiae (strain ATCC 204508 / S288c) (Baker's yeast).